A 76-amino-acid chain; its full sequence is UPF0248 protein MmarC5_1387 (76 aa).

Belongs to the UPF0248 family.

The chain is UPF0248 protein MmarC5_1387 from Methanococcus maripaludis (strain C5 / ATCC BAA-1333).